The chain runs to 614 residues: Probable indole-3-acetic acid-amido synthetase GH3.2 (614 aa).

This sequence belongs to the IAA-amido conjugating enzyme family. Expressed in roots, flowers and callus.

Functionally, may catalyze the synthesis of indole-3-acetic acid (IAA)-amino acid conjugates, providing a mechanism for the plant to cope with the presence of excess auxin. This Oryza sativa subsp. japonica (Rice) protein is Probable indole-3-acetic acid-amido synthetase GH3.2 (GH3.2).